Consider the following 570-residue polypeptide: Urease subunit alpha (570 aa).

The 436-residue stretch at 135 to 570 folds into the Urease domain; it reads GGLDIHVHFN…ELPLAQRYHL (436 aa). Ni(2+) contacts are provided by His140, His142, and Lys219. Lys219 carries the post-translational modification N6-carboxylysine. Residue His221 coordinates substrate. The Ni(2+) site is built by His248 and His274. The Proton donor role is filled by His322. Asp362 lines the Ni(2+) pocket.

This sequence belongs to the metallo-dependent hydrolases superfamily. Urease alpha subunit family. As to quaternary structure, heterotrimer of UreA (gamma), UreB (beta) and UreC (alpha) subunits. Three heterotrimers associate to form the active enzyme. It depends on Ni cation as a cofactor. Post-translationally, carboxylation allows a single lysine to coordinate two nickel ions.

It is found in the cytoplasm. The enzyme catalyses urea + 2 H2O + H(+) = hydrogencarbonate + 2 NH4(+). The protein operates within nitrogen metabolism; urea degradation; CO(2) and NH(3) from urea (urease route): step 1/1. The sequence is that of Urease subunit alpha from Natronomonas pharaonis (strain ATCC 35678 / DSM 2160 / CIP 103997 / JCM 8858 / NBRC 14720 / NCIMB 2260 / Gabara) (Halobacterium pharaonis).